The primary structure comprises 507 residues: UDP-N-acetylhexosamine pyrophosphorylase-like protein 1 (507 aa).

A Substrate binding motif is present at residues 111 to 114 (LAGG). UTP is bound by residues 111–114 (LAGG), Lys-125, Gln-199, and Gly-225. Asn-226 contributes to the substrate binding site. Asp-256 is a UTP binding site. Residues 306 to 307 (EY) carry the Substrate binding motif. Lys-380 contributes to the UTP binding site. Lys-410 is a binding site for substrate.

This sequence belongs to the UDPGP type 1 family.

The sequence is that of UDP-N-acetylhexosamine pyrophosphorylase-like protein 1 (Uap1l1) from Mus musculus (Mouse).